The primary structure comprises 250 residues: Peptidyl-tRNA hydrolase, mitochondrial (250 aa).

The N-terminal 45 residues, Met-1 to Ala-45, are a transit peptide targeting the mitochondrion. Tyr-68 contacts tRNA. His-73 (proton acceptor) is an active-site residue. Residues Phe-118, Asn-120, and Asn-166 each contribute to the tRNA site.

It belongs to the PTH family.

Its subcellular location is the mitochondrion. The enzyme catalyses an N-acyl-L-alpha-aminoacyl-tRNA + H2O = an N-acyl-L-amino acid + a tRNA + H(+). The natural substrate for this enzyme may be peptidyl-tRNAs which drop off the ribosome during protein synthesis. In Oryza sativa subsp. japonica (Rice), this protein is Peptidyl-tRNA hydrolase, mitochondrial.